Consider the following 98-residue polypeptide: Large ribosomal subunit protein bL28 (98 aa).

In terms of assembly, part of the 50S ribosomal subunit.

This chain is Large ribosomal subunit protein bL28 (rpmB), found in Thermus thermophilus (strain ATCC 27634 / DSM 579 / HB8).